The following is a 255-amino-acid chain: Tabinhibitin 1 (255 aa).

The signal sequence occupies residues 1 to 23 (MTSILVSRFLIAALVLQYATSDA). The 145-residue stretch at 67-211 (LSKINDVRDH…KARALLTCNF (145 aa)) folds into the SCP domain.

Belongs to the CRISP family. Expressed in salivary glands.

Its subcellular location is the secreted. Its function is as follows. Inhibits platelet aggregation induced by all agonists tested. May act by competing with fibrinogen for binding to glycoprotein IIb/IIIa (ITGA2B/ITGB3). The protein is Tabinhibitin 1 of Tabanus yao (Horsefly).